We begin with the raw amino-acid sequence, 688 residues long: UvrABC system protein B (688 aa).

The Helicase ATP-binding domain occupies 31–414; it reads GRITAGETDV…LGIADGVVEQ (384 aa). 44–51 provides a ligand contact to ATP; that stretch reads GATGTGKS. Positions 97–120 match the Beta-hairpin motif; the sequence is YYDYYQPEAYVPQTDTFIEKDSSI. A Helicase C-terminal domain is found at 434-600; it reads QIDDLLEEIR…PLRKRIADIT (167 aa). Positions 614–633 are disordered; it reads LAGRDQKRKSPTPSLRSGGI. The UVR domain maps to 642–677; the sequence is ESLIADLNAQMLAAAGELKFELAARLRDELSDLKRD.

Belongs to the UvrB family. Forms a heterotetramer with UvrA during the search for lesions. Interacts with UvrC in an incision complex.

It is found in the cytoplasm. Its function is as follows. The UvrABC repair system catalyzes the recognition and processing of DNA lesions. A damage recognition complex composed of 2 UvrA and 2 UvrB subunits scans DNA for abnormalities. Upon binding of the UvrA(2)B(2) complex to a putative damaged site, the DNA wraps around one UvrB monomer. DNA wrap is dependent on ATP binding by UvrB and probably causes local melting of the DNA helix, facilitating insertion of UvrB beta-hairpin between the DNA strands. Then UvrB probes one DNA strand for the presence of a lesion. If a lesion is found the UvrA subunits dissociate and the UvrB-DNA preincision complex is formed. This complex is subsequently bound by UvrC and the second UvrB is released. If no lesion is found, the DNA wraps around the other UvrB subunit that will check the other stand for damage. The protein is UvrABC system protein B of Leifsonia xyli subsp. xyli (strain CTCB07).